Reading from the N-terminus, the 706-residue chain is Probable E3 ubiquitin ligase complex SCF subunit sconB (706 aa).

Basic and acidic residues predominate over residues 1-12 (MQSDDRSVREGS). Disordered stretches follow at residues 1–43 (MQSD…LLQQ) and 56–76 (TAEE…SFGA). The span at 34–43 (QQQQQQLLQQ) shows a compositional bias: low complexity. The 47-residue stretch at 203–249 (IDFLTALPPEISFKILCYLDTTSLCKAAQVSSRWRALADDDVVWHRM) folds into the F-box domain. 7 WD repeats span residues 377 to 414 (GHTN…ELRT), 417 to 456 (GHQS…STYT), 458 to 494 (HRGG…TFLL), 496 to 537 (GHTD…RTFH), 589 to 632 (ATET…CLRT), 635 to 672 (GHLE…CERT), and 675 to 706 (GHSG…SFRN).

The protein belongs to the WD repeat MET30/SCONB/SCON-2 family. As to quaternary structure, component of the SCF(sconB) E3 ubiquitin ligase complex.

It functions in the pathway protein modification; protein ubiquitination. Its function is as follows. Component of the SCF(sconB) E3 ubiquitin ligase complex involved in the regulation of sulfur metabolite repression, probably by mediating the inactivation or degradation of the metR transcription factor. In Aspergillus flavus (strain ATCC 200026 / FGSC A1120 / IAM 13836 / NRRL 3357 / JCM 12722 / SRRC 167), this protein is Probable E3 ubiquitin ligase complex SCF subunit sconB (sconB).